A 517-amino-acid chain; its full sequence is Ribonuclease Y (517 aa).

The helical transmembrane segment at methionine 1–tyrosine 21 threads the bilayer. The KH domain occupies leucine 207–aspartate 273. The region spanning alanine 333–alanine 426 is the HD domain.

Belongs to the RNase Y family.

The protein resides in the cell membrane. Endoribonuclease that initiates mRNA decay. The protein is Ribonuclease Y of Campylobacter curvus (strain 525.92).